The following is a 470-amino-acid chain: Probable citrate synthase, mitochondrial (470 aa).

Residues histidine 297, histidine 351, and aspartate 406 contribute to the active site.

It belongs to the citrate synthase family. In terms of assembly, homodimer.

Its subcellular location is the mitochondrion matrix. The enzyme catalyses oxaloacetate + acetyl-CoA + H2O = citrate + CoA + H(+). It participates in carbohydrate metabolism; tricarboxylic acid cycle; isocitrate from oxaloacetate: step 1/2. The chain is Probable citrate synthase, mitochondrial from Leishmania braziliensis.